Reading from the N-terminus, the 187-residue chain is Choriogonadotropin subunit beta variant 1 (187 aa).

The N-terminal stretch at 1–50 (MSTFPVLAEDIPLRERHVKGRVDPHFRAPKMEMFQRLLLLLLLSMGGTWA) is a signal peptide. 6 disulfide bridges follow: cysteine 59–cysteine 107, cysteine 73–cysteine 122, cysteine 76–cysteine 160, cysteine 84–cysteine 138, cysteine 88–cysteine 140, and cysteine 143–cysteine 150. Asparagine 63 and asparagine 80 each carry an N-linked (GlcNAc...) asparagine glycan. The disordered stretch occupies residues 161-187 (DDPRFQDSSSSKAPPPSLPSPSRLPGP). A compositionally biased stretch (pro residues) spans 173-187 (APPPSLPSPSRLPGP).

This sequence belongs to the glycoprotein hormones subunit beta family. As to expression, expressed in placenta, testis and pituitary.

Its subcellular location is the secreted. This Homo sapiens (Human) protein is Choriogonadotropin subunit beta variant 1 (CGB1).